Consider the following 334-residue polypeptide: Adenine deaminase (334 aa).

The Zn(2+) site is built by His17, His19, and His197. Catalysis depends on Glu200, which acts as the Proton donor. Zn(2+) is bound at residue Asp278. Asp279 lines the substrate pocket.

Belongs to the metallo-dependent hydrolases superfamily. Adenosine and AMP deaminases family. Adenine deaminase type 2 subfamily. It depends on Zn(2+) as a cofactor.

It carries out the reaction adenine + H2O + H(+) = hypoxanthine + NH4(+). Functionally, catalyzes the hydrolytic deamination of adenine to hypoxanthine. Plays an important role in the purine salvage pathway and in nitrogen catabolism. The chain is Adenine deaminase from Rhodospirillum rubrum (strain ATCC 11170 / ATH 1.1.1 / DSM 467 / LMG 4362 / NCIMB 8255 / S1).